Here is a 173-residue protein sequence, read N- to C-terminus: Protein tyrosine phosphatase type IVA 3 (173 aa).

The region spanning 8-161 (APVEVSYKHM…YRPKQRLRFK (154 aa)) is the Tyrosine-protein phosphatase domain. A disulfide bridge connects residues cysteine 49 and cysteine 104. Aspartate 72 acts as the Proton donor in catalysis. The active-site Phosphocysteine intermediate is the cysteine 104. Arginine 110 contributes to the substrate binding site. Cysteine 170 is modified (cysteine methyl ester). Cysteine 170 carries the S-farnesyl cysteine lipid modification. Residues 171–173 (CVM) constitute a propeptide, removed in mature form.

It belongs to the protein-tyrosine phosphatase family. Interacts with tubulin. Farnesylated. Farnesylation is required for membrane targeting. Mainly expressed in cardiomyocytes and skeletal muscle; also found in pancreas. Consistently overexpressed in colon cancer metastasis.

It localises to the cell membrane. The protein localises to the early endosome. The catalysed reaction is O-phospho-L-tyrosyl-[protein] + H2O = L-tyrosyl-[protein] + phosphate. With respect to regulation, inhibited by sodium orthovanadate and peroxovanadium compounds, and by pentamidine. In terms of biological role, protein tyrosine phosphatase which stimulates progression from G1 into S phase during mitosis. Enhances cell proliferation, cell motility and invasive activity, and promotes cancer metastasis. May be involved in the progression of cardiac hypertrophy by inhibiting intracellular calcium mobilization in response to angiotensin II. The polypeptide is Protein tyrosine phosphatase type IVA 3 (PTP4A3) (Homo sapiens (Human)).